A 152-amino-acid polypeptide reads, in one-letter code: Xanthine-guanine phosphoribosyltransferase (152 aa).

Residues 37 to 38, Arg-69, and 88 to 96 contribute to the 5-phospho-alpha-D-ribose 1-diphosphate site; these read RG and DDLVDTGGT. Arg-69 lines the GMP pocket. Asp-89 serves as a coordination point for Mg(2+). The guanine site is built by Asp-92 and Ile-135. Xanthine-binding residues include Asp-92 and Ile-135. GMP is bound by residues 92–96 and 134–135; these read DTGGT and WI.

The protein belongs to the purine/pyrimidine phosphoribosyltransferase family. XGPT subfamily. Homotetramer. Requires Mg(2+) as cofactor.

The protein localises to the cell inner membrane. It catalyses the reaction GMP + diphosphate = guanine + 5-phospho-alpha-D-ribose 1-diphosphate. It carries out the reaction XMP + diphosphate = xanthine + 5-phospho-alpha-D-ribose 1-diphosphate. The enzyme catalyses IMP + diphosphate = hypoxanthine + 5-phospho-alpha-D-ribose 1-diphosphate. Its pathway is purine metabolism; GMP biosynthesis via salvage pathway; GMP from guanine: step 1/1. It participates in purine metabolism; XMP biosynthesis via salvage pathway; XMP from xanthine: step 1/1. Purine salvage pathway enzyme that catalyzes the transfer of the ribosyl-5-phosphate group from 5-phospho-alpha-D-ribose 1-diphosphate (PRPP) to the N9 position of the 6-oxopurines guanine and xanthine to form the corresponding ribonucleotides GMP (guanosine 5'-monophosphate) and XMP (xanthosine 5'-monophosphate), with the release of PPi. To a lesser extent, also acts on hypoxanthine. The sequence is that of Xanthine-guanine phosphoribosyltransferase from Shigella boydii serotype 4 (strain Sb227).